We begin with the raw amino-acid sequence, 100 residues long: NADH-quinone oxidoreductase subunit K (100 aa).

3 helical membrane-spanning segments follow: residues 4–24, 28–48, and 60–80; these read LQHG…CLVL, LLFM…AFVV, and IMYI…LALL.

This sequence belongs to the complex I subunit 4L family. As to quaternary structure, NDH-1 is composed of 13 different subunits. Subunits NuoA, H, J, K, L, M, N constitute the membrane sector of the complex.

The protein localises to the cell inner membrane. It catalyses the reaction a quinone + NADH + 5 H(+)(in) = a quinol + NAD(+) + 4 H(+)(out). Functionally, NDH-1 shuttles electrons from NADH, via FMN and iron-sulfur (Fe-S) centers, to quinones in the respiratory chain. The immediate electron acceptor for the enzyme in this species is believed to be ubiquinone. Couples the redox reaction to proton translocation (for every two electrons transferred, four hydrogen ions are translocated across the cytoplasmic membrane), and thus conserves the redox energy in a proton gradient. This is NADH-quinone oxidoreductase subunit K from Proteus mirabilis (strain HI4320).